Here is a 465-residue protein sequence, read N- to C-terminus: Cysteine--tRNA ligase (465 aa).

Residue Cys27 participates in Zn(2+) binding. A 'HIGH' region motif is present at residues 29 to 39; that stretch reads PTVYNFFHIGN. Zn(2+) contacts are provided by Cys207, His232, and Glu236. Residues 264-268 carry the 'KMSKS' region motif; sequence KMSKS. Residue Lys267 coordinates ATP.

It belongs to the class-I aminoacyl-tRNA synthetase family. In terms of assembly, monomer. Zn(2+) serves as cofactor.

Its subcellular location is the cytoplasm. It catalyses the reaction tRNA(Cys) + L-cysteine + ATP = L-cysteinyl-tRNA(Cys) + AMP + diphosphate. The polypeptide is Cysteine--tRNA ligase (Clostridium botulinum (strain Langeland / NCTC 10281 / Type F)).